The chain runs to 310 residues: UDP-N-acetylenolpyruvoylglucosamine reductase (310 aa).

Residues 34 to 213 (RAGGNAEVLF…LRRMNEITSS (180 aa)) form the FAD-binding PCMH-type domain. R178 is an active-site residue. Residue S227 is the Proton donor of the active site. E297 is a catalytic residue.

The protein belongs to the MurB family. Requires FAD as cofactor.

It is found in the cytoplasm. The enzyme catalyses UDP-N-acetyl-alpha-D-muramate + NADP(+) = UDP-N-acetyl-3-O-(1-carboxyvinyl)-alpha-D-glucosamine + NADPH + H(+). It functions in the pathway cell wall biogenesis; peptidoglycan biosynthesis. Functionally, cell wall formation. The protein is UDP-N-acetylenolpyruvoylglucosamine reductase of Parvibaculum lavamentivorans (strain DS-1 / DSM 13023 / NCIMB 13966).